The sequence spans 146 residues: Large ribosomal subunit protein eL28 (146 aa).

The segment at V123–H146 is disordered.

The protein belongs to the eukaryotic ribosomal protein eL28 family.

This chain is Large ribosomal subunit protein eL28, found in Trypanosoma cruzi.